The chain runs to 349 residues: N-acetyltaurine hydrolase (349 aa).

Residues His-26, His-28, Glu-169, His-201, His-230, and Asp-298 each contribute to the a divalent metal cation site.

This sequence belongs to the metallo-dependent hydrolases superfamily. Phosphotriesterase family. A divalent metal cation serves as cofactor.

It localises to the cytoplasm. Its subcellular location is the cytosol. It carries out the reaction N-acetyltaurine + H2O = taurine + acetate. The enzyme catalyses N-propanoyltaurine + H2O = propanoate + taurine. It catalyses the reaction N-acetyl-L-methionine + H2O = L-methionine + acetate. The catalysed reaction is N-acetyl-L-isoleucine + H2O = L-isoleucine + acetate. It carries out the reaction N-acetyl-L-leucine + H2O = L-leucine + acetate. The enzyme catalyses N-acetyl-L-valine + H2O = L-valine + acetate. In terms of biological role, N-acetyltaurine hydrolase that catalyzes the hydrolysis of N-acetyltaurine into taurine and acetate. PTER also acts on other N-acetyl amino acids (Met, Ile, Leu, Val) and N-propionyltaurine, but at lower rates. The chain is N-acetyltaurine hydrolase (pter) from Xenopus tropicalis (Western clawed frog).